The primary structure comprises 300 residues: Urease accessory protein UreD (300 aa).

The protein belongs to the UreD family. As to quaternary structure, ureD, UreF and UreG form a complex that acts as a GTP-hydrolysis-dependent molecular chaperone, activating the urease apoprotein by helping to assemble the nickel containing metallocenter of UreC. The UreE protein probably delivers the nickel.

The protein resides in the cytoplasm. Functionally, required for maturation of urease via the functional incorporation of the urease nickel metallocenter. The sequence is that of Urease accessory protein UreD from Prochlorococcus marinus (strain MIT 9215).